Here is a 218-residue protein sequence, read N- to C-terminus: GCN5-related N-acetyltransferase 9 (218 aa).

The region spanning 36-183 (SALLEATGSE…KEVTLEYPVT (148 aa)) is the N-acetyltransferase domain. Residues 112–114 (MIA), 120–125 (GKGLGK), 152–154 (NTA), and F159 contribute to the acetyl-CoA site.

Belongs to the acetyltransferase family. GNAT subfamily. Oligomer. Expressed throughout the plant.

It is found in the cytoplasm. It localises to the nucleus. It catalyses the reaction an N-terminal L-alpha-aminoacyl-[protein] + acetyl-CoA = N-terminal N(alpha)-acetyl-L-alpha-aminoacyl-[protein] + CoA + H(+). It carries out the reaction L-lysyl-[protein] + acetyl-CoA = N(6)-acetyl-L-lysyl-[protein] + CoA + H(+). Probable protein acetyltransferase with dual specificity triggering both N-alpha-acetylation (NTA) and epsilon-lysine acetylation (KA). This chain is GCN5-related N-acetyltransferase 9, found in Arabidopsis thaliana (Mouse-ear cress).